Reading from the N-terminus, the 512-residue chain is MRDLTSATDSASLESDSSRNQFIINSLLPWYSCSEHEFPHRKARKRRSPKNLDWSVSVQMPLVTSKTKESEKSPKSWSAIAKKHVQGDSPVKKSHSVPVPSDRSEKKSFNSSLGELIETYSPSLDAPRPIQPRGFINTGNICFMNSILQALMYCVPFYNLLKQINRMVPYNFERTTPLIESLTMLSRDFREYSEKFDLQGDSILPEVVYSATKGNPRFEMLQTGEQEDAEEFLNLFLDELHEEFVRERRHYLLKNDERNPKSDIKISNGIKSGLDSFDDQSSVEASGWTEVGKNKKPVIARSATVERSPISQIFGGQLRSTLRVPSARDSVLLEPFQPLQLDIQAEDIHSVIDALEHMTAPEILPEWHSSKGNVTATKQMYIESLPPVLILHLKRFFYEASGGTQKNYKPIAYPARLSIPQNVFSPSVRGSIHPEYDLNAVVYHHGTSASGGHYTVDVQQLDKSGWFRIDDTHIHRVPIHDVENSELSADPSLSKLGHGDRVAYLLFYTRRS.

Residues 64 to 109 (TSKTKESEKSPKSWSAIAKKHVQGDSPVKKSHSVPVPSDRSEKKSF) are disordered. One can recognise a USP domain in the interval 133-511 (RGFINTGNIC…VAYLLFYTRR (379 aa)). The active-site Nucleophile is Cys142. The active-site Proton acceptor is His453.

It belongs to the peptidase C19 family.

It carries out the reaction Thiol-dependent hydrolysis of ester, thioester, amide, peptide and isopeptide bonds formed by the C-terminal Gly of ubiquitin (a 76-residue protein attached to proteins as an intracellular targeting signal).. This Schizosaccharomyces pombe (strain 972 / ATCC 24843) (Fission yeast) protein is Probable ubiquitin carboxyl-terminal hydrolase 3 (ubp3).